Reading from the N-terminus, the 228-residue chain is Biosynthetic peptidoglycan transglycosylase (228 aa).

The helical transmembrane segment at 8–28 threads the bilayer; that stretch reads ILAALVAAFLLYNLWVLGHII.

Belongs to the glycosyltransferase 51 family.

It localises to the cell inner membrane. It catalyses the reaction [GlcNAc-(1-&gt;4)-Mur2Ac(oyl-L-Ala-gamma-D-Glu-L-Lys-D-Ala-D-Ala)](n)-di-trans,octa-cis-undecaprenyl diphosphate + beta-D-GlcNAc-(1-&gt;4)-Mur2Ac(oyl-L-Ala-gamma-D-Glu-L-Lys-D-Ala-D-Ala)-di-trans,octa-cis-undecaprenyl diphosphate = [GlcNAc-(1-&gt;4)-Mur2Ac(oyl-L-Ala-gamma-D-Glu-L-Lys-D-Ala-D-Ala)](n+1)-di-trans,octa-cis-undecaprenyl diphosphate + di-trans,octa-cis-undecaprenyl diphosphate + H(+). The protein operates within cell wall biogenesis; peptidoglycan biosynthesis. Its function is as follows. Peptidoglycan polymerase that catalyzes glycan chain elongation from lipid-linked precursors. In Chromobacterium violaceum (strain ATCC 12472 / DSM 30191 / JCM 1249 / CCUG 213 / NBRC 12614 / NCIMB 9131 / NCTC 9757 / MK), this protein is Biosynthetic peptidoglycan transglycosylase.